Consider the following 113-residue polypeptide: MKQLGDDAEALAERYLIKQGLVVIARNYRCRFGEIDLVMKQGATIVFVEVRMRSHATFGGAAASIHAAKRQKLILTAEHFLQRHGSAPCRFDAILLSKRDADGIEWIQDAFSA.

The protein belongs to the UPF0102 family.

The protein is UPF0102 protein Mfla_2283 of Methylobacillus flagellatus (strain ATCC 51484 / DSM 6875 / VKM B-1610 / KT).